The following is a 350-amino-acid chain: Phenylalanine--tRNA ligase alpha subunit (350 aa).

Glu-262 lines the Mg(2+) pocket.

It belongs to the class-II aminoacyl-tRNA synthetase family. Phe-tRNA synthetase alpha subunit type 1 subfamily. In terms of assembly, tetramer of two alpha and two beta subunits. The cofactor is Mg(2+).

It localises to the cytoplasm. It carries out the reaction tRNA(Phe) + L-phenylalanine + ATP = L-phenylalanyl-tRNA(Phe) + AMP + diphosphate + H(+). This chain is Phenylalanine--tRNA ligase alpha subunit (pheS), found in Thermus thermophilus (strain ATCC 27634 / DSM 579 / HB8).